The sequence spans 405 residues: MSSSKYVGQLKQNNIQINSLRGSNDRAEKHMLEHEQALTEKTNLFMEYQQNELKKHTDDKSNPHLVTKEQVGLGNVLNNVQATKEEFDEHLNDTLNPHSVTKSQVGLANVLNEKQATKTEFDQHAQDTIIHITASERTTWNAAESNSKKYTDAHSQNTNNPHKVTAIQVGLGNLTNDKQATKLEFDAHIKDNERHITSTERSKWNSAQLTKISSDDGQPLVSITSDFHSELLNSPTLTYFGYDKAALEAPPSNGRGFWTCSADKLYGQAIVLTNDNKTYRKSLINGAWSSWERLISSSEIDNVPWLSVTYKNGAKTGSRPLQYRKVAGTLQLSGHVVTNRDVVFASIPTEFSPTQGAVKSVEVSGTFGRSKLFVNSNGDLQLSGVSADNSAAITGYYIDVVVPLN.

A coiled-coil region spans residues Q9–Q36.

This chain is SPbeta prophage-derived uncharacterized protein YomR (yomR), found in Bacillus subtilis (strain 168).